Here is a 124-residue protein sequence, read N- to C-terminus: Hydrogenase maturation factor HypA (124 aa).

Ni(2+) is bound at residue His-2. Residues Cys-78, Cys-81, Cys-97, and Cys-100 each coordinate Zn(2+).

This sequence belongs to the HypA/HybF family.

Its function is as follows. Involved in the maturation of [NiFe] hydrogenases. Required for nickel insertion into the metal center of the hydrogenase. The chain is Hydrogenase maturation factor HypA from Methanocaldococcus jannaschii (strain ATCC 43067 / DSM 2661 / JAL-1 / JCM 10045 / NBRC 100440) (Methanococcus jannaschii).